The sequence spans 248 residues: 2,3-bisphosphoglycerate-dependent phosphoglycerate mutase (248 aa).

Residues 8–15, 21–22, R60, 87–90, K98, 114–115, and 183–184 each bind substrate; these read RHGESLWN, TG, ERHY, RR, and GN. Residue H9 is the Tele-phosphohistidine intermediate of the active site. The active-site Proton donor/acceptor is E87.

The protein belongs to the phosphoglycerate mutase family. BPG-dependent PGAM subfamily.

The enzyme catalyses (2R)-2-phosphoglycerate = (2R)-3-phosphoglycerate. The protein operates within carbohydrate degradation; glycolysis; pyruvate from D-glyceraldehyde 3-phosphate: step 3/5. Functionally, catalyzes the interconversion of 2-phosphoglycerate and 3-phosphoglycerate. The chain is 2,3-bisphosphoglycerate-dependent phosphoglycerate mutase from Methanospirillum hungatei JF-1 (strain ATCC 27890 / DSM 864 / NBRC 100397 / JF-1).